Here is a 1295-residue protein sequence, read N- to C-terminus: MMEILRGSPALSAFRINKLLARFQAANLQVHNIYAEYVHFADLNAPLNDSEQAQLTRLLQYGPALSSHTPAGKLLLVTPRPGTISPWSSKATDIAHNCGLQQVDRLERGVAYYIEASTLTAEQWRQVAAELHDRMMETVFPSLTDAEKLFIHHQPAPVSSVDLLGEGRQALIDANLRLGLALAEDEIDYLQEAFTKLGRNPNDIELYMFAQANSEHCRHKIFNADWIIDGKPQPKSLFKMIKNTFETTPDYVLSAYKDNAAVMEGSAVGRYFADHNTGRYDFHQEPAHILMKVETHNHPTAISPWPGAATGSGGEIRDEGATGRGAKPKAGLVGFSVSNLRIPGFEQPWEEDFGKPERIVTALDIMTEGPLGGAAFNNEFGRPALTGYFRTYEEKVNSHNGEELRGYHKPIMLAGGIGNIRADHVQKGEIVVGAKLIVLGGPAMNIGLGGGAASSMASGQSDADLDFASVQRDNPEMERRCQEVIDRCWQLGDANPILFIHDVGAGGLSNAMPELVSDGGRGGKFELRDILSDEPGMSPLEIWCNESQERYVLAVAADQLPLFDELCKRERAPYAVIGDATEEQHLSLHDNHFDNQPIDLPLDVLLGKTPKMTRDVQTLKAKGDALNRADITIADAVNRVLHLPTVAEKTFLVTIGDRTVTGMVARDQMVGPWQVPVADCAVTTASLDSYYGEAMSIGERAPVALLDFAASARLAVGEALTNIAATQIGDIKRIKLSANWMAAAGHPGEDAGLYDAVKAVGEELCPQLGLTIPVGKDSMSMKTRWQEGNEQREMTSPLSLVISAFARVEDVRHTLTPQLSTEDNALLLIDLGKGHNALGATALAQVYRQLGDKPADVRDVAQLKGFYDAMQALVAARKLLAWHDRSDGGLLVTLAEMAFAGHCGVQVDIAALGDDHLAALFNEELGGVIQVRAEDRDAVEALLAQYGLADCVHYLGQALAGDRFVITANDQTVFSESRTTLRVWWAETTWQMQRLRDNPQCADQEHEAKANDADPGLNVKLSFDINEDIAAPYIATGARPKVAVLREQGGNSHVEMAAAFHRAGFDAIDVHMSDLLGGRIGLGNFHALVACGGFSYGDVLGAGEGWAKSILFNPRVRDEFETFFHRPQTLALGVCNGCQMMSNLRELIPGSELWPRFVRNHSDRFEARFSLVEVTQSPSLLLQGMVGSQMPIAVSHGEGRVEVRDDAHLAALESKGLVALRYVDNFGKVTETYPANPNGSPNGITAVTTENGRVTIMMPHPERVFRTVANSWHPENWGEDSPWMRIFRNARKQLG.

The interval 305-327 (WPGAATGSGGEIRDEGATGRGAK) is disordered. ATP contacts are provided by residues 307 to 318 (GAATGSGGEIRD), 386 to 388 (TGY), and Ala678. Mg(2+) is bound by residues Asp679, Glu718, Asn722, and Asp884. Ser886 provides a ligand contact to ATP. In terms of domain architecture, Glutamine amidotransferase type-1 spans 1041-1295 (KVAVLREQGG…IFRNARKQLG (255 aa)). Cys1135 functions as the Nucleophile in the catalytic mechanism. Residues His1260 and Glu1262 contribute to the active site.

This sequence in the N-terminal section; belongs to the FGAMS family. As to quaternary structure, monomer.

Its subcellular location is the cytoplasm. The enzyme catalyses N(2)-formyl-N(1)-(5-phospho-beta-D-ribosyl)glycinamide + L-glutamine + ATP + H2O = 2-formamido-N(1)-(5-O-phospho-beta-D-ribosyl)acetamidine + L-glutamate + ADP + phosphate + H(+). It participates in purine metabolism; IMP biosynthesis via de novo pathway; 5-amino-1-(5-phospho-D-ribosyl)imidazole from N(2)-formyl-N(1)-(5-phospho-D-ribosyl)glycinamide: step 1/2. In terms of biological role, phosphoribosylformylglycinamidine synthase involved in the purines biosynthetic pathway. Catalyzes the ATP-dependent conversion of formylglycinamide ribonucleotide (FGAR) and glutamine to yield formylglycinamidine ribonucleotide (FGAM) and glutamate. The protein is Phosphoribosylformylglycinamidine synthase of Salmonella choleraesuis (strain SC-B67).